The chain runs to 482 residues: MRVIKGNKCDWEVVIGLEVHAQVISNSKLFSGASAKTYDAPPNTQVSLFDVAMPGMLPVLNEYCIYQAVKTGIALSCKISKYSAFDRKNYFYPDLPAGYQITQFYYPIATEGKVVLEDHNAKEVRIARIHLEQDAGKSIHEFSQTYIDFNRAGVALMEIVSEPDLRSVEEVAEYLKKLRMILRFIGTCDGDMEKGSFRCDANVSVRPFGSNELGVRSEIKNLNSIRYVMQAIEYEANKQVNILENNEIFTQNTLLFDVSLGQTRVIRTKEDAHDYRYFPDPDLFPVKIDDQYIDHVKSLLPELPLQKRDRYINDFNLNKSDADILSSDKDVAMYFEKVVEKHDARLAASWIIGELFGRLNKLGITIDESSVKAEHLIQLLDLIVDNTISGKIAKQVFDMMFESGKLPALIVSEHGLKQVDDADVLYVVVEKILKDNASKVEEYKQGKEKLFGYFVGQVMKETQGKANPEMVNSIIKQQLESK.

Belongs to the GatB/GatE family. GatB subfamily. In terms of assembly, heterotrimer of A, B and C subunits.

The enzyme catalyses L-glutamyl-tRNA(Gln) + L-glutamine + ATP + H2O = L-glutaminyl-tRNA(Gln) + L-glutamate + ADP + phosphate + H(+). It carries out the reaction L-aspartyl-tRNA(Asn) + L-glutamine + ATP + H2O = L-asparaginyl-tRNA(Asn) + L-glutamate + ADP + phosphate + 2 H(+). Allows the formation of correctly charged Asn-tRNA(Asn) or Gln-tRNA(Gln) through the transamidation of misacylated Asp-tRNA(Asn) or Glu-tRNA(Gln) in organisms which lack either or both of asparaginyl-tRNA or glutaminyl-tRNA synthetases. The reaction takes place in the presence of glutamine and ATP through an activated phospho-Asp-tRNA(Asn) or phospho-Glu-tRNA(Gln). The polypeptide is Aspartyl/glutamyl-tRNA(Asn/Gln) amidotransferase subunit B (Ehrlichia canis (strain Jake)).